The following is a 582-amino-acid chain: Isopropyl malate synthase AMT7 (582 aa).

Residues 61–341 enclose the Pyruvate carboxyltransferase domain; it reads PVLFSTDLRD…EPGIDLSRLD (281 aa).

It belongs to the alpha-IPM synthase/homocitrate synthase family. LeuA type 2 subfamily.

The catalysed reaction is 3-methyl-2-oxobutanoate + acetyl-CoA + H2O = (2S)-2-isopropylmalate + CoA + H(+). Its pathway is mycotoxin biosynthesis. Functionally, isopropyl malate synthase; part of the gene clusters that mediate the biosynthesis of AM-toxins, host-selective toxins (HSTs) causing Alternaria blotch on apple, a worldwide distributed disease. AM-toxins are cyclic depsipeptides containing the 3 residues 2-hydroxy-isovaleric acid (2-HIV), dehydroalanine, L-alanine which are common for all 3 AM-toxins I to III. The fourth precursor is L-alpha-amino-methoxyphenyl-valeric acid (L-Amv) for AM-toxin I, L-alpha-amino-phenyl-valeric acid (L-Apv) for AM-toxin II, and L-alpha-amino-hydroxyphenyl-valeric acid (L-Ahv) for AM-toxin III. AM-toxins have two target sites for affecting susceptible apple cells; they cause invagination of the plasma membrane and electrolyte loss and chloroplast disorganization. The non-ribosomal peptide synthetase AMT1 contains 4 catalytic modules and is responsible for activation of each residue in AM-toxin. The aldo-keto reductase AMT2 catalyzes the conversion of 2-keto-isovaleric acid (2-KIV) to 2-hydroxy-isovaleric acid (2-HIV), one of the precursor residues incorporated by AMT1 during AM-toxin biosynthesis, by reduction of its ketone to an alcohol. The cytochrome P450 monooxygenase AMT3 and the thioesterase AMT4 are also important for AM-toxin production, but their exact function within the AM-toxin biosynthesis are not known yet. Up to 21 proteins (including AMT1 to AMT4) are predicted to be involved in AM-toxin biosynthesis since their expression ishighly up-regulated in AM-toxin-producing cultures. This is Isopropyl malate synthase AMT7 from Alternaria alternata (Alternaria rot fungus).